The primary structure comprises 104 residues: Iron-sulfur cluster assembly protein CyaY (104 aa).

This sequence belongs to the frataxin family.

In terms of biological role, involved in iron-sulfur (Fe-S) cluster assembly. May act as a regulator of Fe-S biogenesis. This chain is Iron-sulfur cluster assembly protein CyaY, found in Aliivibrio fischeri (strain MJ11) (Vibrio fischeri).